The following is a 462-amino-acid chain: Glycine--tRNA ligase (462 aa).

Substrate is bound by residues R100 and E174. ATP-binding positions include 206–208 (RNE), 216–221 (FRTREF), 290–291 (EL), and 334–337 (GADR). 221–225 (FEQME) contributes to the substrate binding site. 330 to 334 (EPSLG) provides a ligand contact to substrate.

It belongs to the class-II aminoacyl-tRNA synthetase family. Homodimer.

It is found in the cytoplasm. It catalyses the reaction tRNA(Gly) + glycine + ATP = glycyl-tRNA(Gly) + AMP + diphosphate. Catalyzes the attachment of glycine to tRNA(Gly). This is Glycine--tRNA ligase from Ruminiclostridium cellulolyticum (strain ATCC 35319 / DSM 5812 / JCM 6584 / H10) (Clostridium cellulolyticum).